Reading from the N-terminus, the 132-residue chain is Small ribosomal subunit protein uS8 (132 aa).

This sequence belongs to the universal ribosomal protein uS8 family. Part of the 30S ribosomal subunit. Contacts proteins S5 and S12.

One of the primary rRNA binding proteins, it binds directly to 16S rRNA central domain where it helps coordinate assembly of the platform of the 30S subunit. In Rickettsia akari (strain Hartford), this protein is Small ribosomal subunit protein uS8.